The primary structure comprises 846 residues: Homeodomain-interacting protein kinase 1 (846 aa).

Residues 47–74 form a disordered region; that stretch reads NPFSIQKAPGTSSDNEQRAPKRRADEEA. Residues 61–72 show a composition bias toward basic and acidic residues; that stretch reads NEQRAPKRRADE. In terms of domain architecture, Protein kinase spans 147–483; sequence YEVLEFLGKG…PAEGLESKFV (337 aa). ATP-binding positions include 153–161 and Lys-176; that span reads LGKGTFGQV. Asp-272 (proton acceptor) is an active-site residue. The tract at residues 741–790 is disordered; sequence LAAQPKKNSPAPSVITLSSDEDSNGAGSSNSGSTTRTGAVNPVRNDTLPM. The segment covering 746-757 has biased composition (polar residues); sequence KKNSPAPSVITL. Low complexity predominate over residues 764 to 773; it reads NGAGSSNSGS.

It belongs to the protein kinase superfamily. CMGC Ser/Thr protein kinase family. HIPK subfamily. In terms of tissue distribution, broadly expressed during embryogenesis. Expression becomes more restricted during larval development. L3 larvae display robust expression in many head and motor neurons, and lower levels of expression in the intestine and the seam cells of the hypodermis. By late L4 stage, expression is largely restricted to neurons and is maintained in nerve cells of the head and nerve cord during adulthood. Expressed in adult pharyngeal cells, hypodermal cells, gonadal sheath cells and distal tip cells but not in germline cells. Expressed in serotonergic neurons such as ADF and NSM and in GABAergic neurons, including RME, RIS and DVB.

It is found in the nucleus. The catalysed reaction is L-seryl-[protein] + ATP = O-phospho-L-seryl-[protein] + ADP + H(+). The enzyme catalyses L-threonyl-[protein] + ATP = O-phospho-L-threonyl-[protein] + ADP + H(+). Functionally, serine/threonine-protein kinase required in the somatic gonadal cells to regulate germline proliferation during larval development and in adulthood. Plays a role in the development/differentiation of gonadal distal tip cells. Required for normal lifespan in a pha-4 and mxl-2-dependent manner. Also contributes to survival following heat or oxidative stress. Prevents sumoylation and inactivation of heat shock transcription factor hsf-1 which enhances hsf-1-dependent transcriptional induction of chaperones in response to heat shock. Also required for hormetic extension of longevity in response to heat stress. Also contributes to longevity by promoting autophagy under nutrient stress conditions through induction of autophagosome formation and autophagy gene expression. Provides protection against proteotoxic polyglutamine aggregate and the associated locomotory toxicity, probably as a result of kinase activity. Contributes to longevity via gamma-aminobutyric acid (GABA)ergic signaling by promoting autophagy through mxl-2, hlh-30 and daf-16 but independent of hsf-1 and phas-4, to induce autophagosome formation and the expression of autophagy genes. Promotes thermotolerance via serotonergic signaling by serotonergic neurons. Preserves neuronal function in aging animals by mitigating against age-associated decline in axonal and synaptic transmissions. Acts as an activator of nhr-49-dependent hypoxia response, including the up-regulation of fmo-2 and acs-2, the induction of autophagosome formation and expression of autophagy genes. In Caenorhabditis elegans, this protein is Homeodomain-interacting protein kinase 1.